The following is a 55-amino-acid chain: Large ribosomal subunit protein bL33 (55 aa).

The protein belongs to the bacterial ribosomal protein bL33 family.

The protein is Large ribosomal subunit protein bL33 of Enterobacter sp. (strain 638).